Consider the following 487-residue polypeptide: 3-octaprenyl-4-hydroxybenzoate carboxy-lyase (487 aa).

Residue asparagine 172 coordinates Mn(2+). Residues 175–177 (IYR), 189–191 (RWL), and 194–195 (RG) each bind prenylated FMN. Glutamate 238 is a binding site for Mn(2+). The Proton donor role is filled by aspartate 287.

This sequence belongs to the UbiD family. In terms of assembly, homohexamer. Prenylated FMN serves as cofactor. Requires Mn(2+) as cofactor.

It is found in the cell membrane. The enzyme catalyses a 4-hydroxy-3-(all-trans-polyprenyl)benzoate + H(+) = a 2-(all-trans-polyprenyl)phenol + CO2. The protein operates within cofactor biosynthesis; ubiquinone biosynthesis. Functionally, catalyzes the decarboxylation of 3-octaprenyl-4-hydroxy benzoate to 2-octaprenylphenol, an intermediate step in ubiquinone biosynthesis. The polypeptide is 3-octaprenyl-4-hydroxybenzoate carboxy-lyase (Nitrosomonas europaea (strain ATCC 19718 / CIP 103999 / KCTC 2705 / NBRC 14298)).